A 435-amino-acid chain; its full sequence is Serine carboxypeptidase-like 16 (435 aa).

An N-terminal signal peptide occupies residues 1–23 (MGSWIPKLLLLQLVLLLTKHADS). 3 disulfide bridges follow: Cys82/Cys325, Cys246/Cys260, and Cys284/Cys291. A glycan (N-linked (GlcNAc...) asparagine) is linked at Asn103. The active site involves Ser178. Asn305 carries N-linked (GlcNAc...) asparagine glycosylation. The active site involves Asp360. Asn376 carries an N-linked (GlcNAc...) asparagine glycan. His413 is an active-site residue.

Belongs to the peptidase S10 family. As to expression, expressed in seedlings, roots and leaves.

The protein localises to the secreted. Functionally, probable carboxypeptidase. The sequence is that of Serine carboxypeptidase-like 16 (SCPL16) from Arabidopsis thaliana (Mouse-ear cress).